We begin with the raw amino-acid sequence, 571 residues long: Glutamine--tRNA ligase (571 aa).

A 'HIGH' region motif is present at residues 35–45 (PEPNGYLHIGH). ATP-binding positions include 36–38 (EPN) and 42–48 (HIGHAKS). 2 residues coordinate L-glutamine: D68 and Y213. Residues T232, 262 to 263 (RL), and 270 to 272 (LSK) each bind ATP. The 'KMSKS' region signature appears at 269–273 (ILSKR).

Belongs to the class-I aminoacyl-tRNA synthetase family. As to quaternary structure, monomer.

Its subcellular location is the cytoplasm. It carries out the reaction tRNA(Gln) + L-glutamine + ATP = L-glutaminyl-tRNA(Gln) + AMP + diphosphate. The protein is Glutamine--tRNA ligase of Buchnera aphidicola subsp. Acyrthosiphon pisum (strain Tuc7).